A 285-amino-acid chain; its full sequence is Isoprenyl transferase 2 (285 aa).

Residues Arg11–Pro30 are disordered. The active site involves Asp43. Position 43 (Asp43) interacts with Mg(2+). Residues Gly44–Arg47, Trp48, Arg56, His60, and Ser88–Glu90 contribute to the substrate site. The active-site Proton acceptor is the Asn91. Residues Trp92, Arg94, Arg211, and Arg217–Ser219 contribute to the substrate site. Glu230 contacts Mg(2+).

It belongs to the UPP synthase family. As to quaternary structure, homodimer. It depends on Mg(2+) as a cofactor.

Functionally, catalyzes the condensation of isopentenyl diphosphate (IPP) with allylic pyrophosphates generating different type of terpenoids. The chain is Isoprenyl transferase 2 from Streptomyces avermitilis (strain ATCC 31267 / DSM 46492 / JCM 5070 / NBRC 14893 / NCIMB 12804 / NRRL 8165 / MA-4680).